The sequence spans 303 residues: tRNA pseudouridine synthase A (303 aa).

The active-site Nucleophile is Asp59. Tyr128 serves as a coordination point for substrate.

Belongs to the tRNA pseudouridine synthase TruA family. As to quaternary structure, homodimer.

The enzyme catalyses uridine(38/39/40) in tRNA = pseudouridine(38/39/40) in tRNA. Formation of pseudouridine at positions 38, 39 and 40 in the anticodon stem and loop of transfer RNAs. The polypeptide is tRNA pseudouridine synthase A (Bifidobacterium longum (strain DJO10A)).